Reading from the N-terminus, the 260-residue chain is Phosphatidate cytidylyltransferase (260 aa).

The next 7 helical transmembrane spans lie at 9–29 (IIALLIFLPILLMGGTTLMLF), 46–66 (MIKLISVPGIFSALALIIIML), 70–90 (AGDWVSNIQLKSLIAMSFILL), 102–122 (FMDAAFCLMSVAYVGIGFMYF), 130–150 (LHYILYAFLVVWLTDTGAYIF), 172–192 (FIGGLICSLIVPIVMLFFVDF), and 196–216 (IWLLLLVTIILSIFGQLGDLV).

The protein belongs to the CDS family.

It localises to the cell membrane. It carries out the reaction a 1,2-diacyl-sn-glycero-3-phosphate + CTP + H(+) = a CDP-1,2-diacyl-sn-glycerol + diphosphate. The protein operates within phospholipid metabolism; CDP-diacylglycerol biosynthesis; CDP-diacylglycerol from sn-glycerol 3-phosphate: step 3/3. The polypeptide is Phosphatidate cytidylyltransferase (cdsA) (Staphylococcus haemolyticus (strain JCSC1435)).